A 311-amino-acid polypeptide reads, in one-letter code: Malate dehydrogenase (311 aa).

Residues 7-13 (GAAGGIG) and Asp34 each bind NAD(+). The substrate site is built by Arg81 and Arg87. NAD(+) contacts are provided by residues Asn94 and 117–119 (ITN). Residues Asn119 and Arg153 each coordinate substrate. The active-site Proton acceptor is the His177. Residue Met227 coordinates NAD(+).

It belongs to the LDH/MDH superfamily. MDH type 1 family. In terms of assembly, homodimer.

It catalyses the reaction (S)-malate + NAD(+) = oxaloacetate + NADH + H(+). Functionally, catalyzes the reversible oxidation of malate to oxaloacetate. The polypeptide is Malate dehydrogenase (Shewanella baltica (strain OS223)).